Here is a 100-residue protein sequence, read N- to C-terminus: Small ribosomal subunit protein uS14c (100 aa).

This sequence belongs to the universal ribosomal protein uS14 family. Part of the 30S ribosomal subunit.

The protein localises to the plastid. It localises to the chloroplast. Functionally, binds 16S rRNA, required for the assembly of 30S particles. This chain is Small ribosomal subunit protein uS14c, found in Fagopyrum esculentum subsp. ancestrale (Wild buckwheat).